We begin with the raw amino-acid sequence, 317 residues long: Retinol dehydrogenase 16 (317 aa).

Residue 33-57 (FITGCDSGFGTLLARQLDRRGMRVL) coordinates NAD(+). Tyr-176 (proton acceptor) is an active-site residue. Residues 289–309 (LFYLPLSYLPTFLVDALLYWT) form a helical membrane-spanning segment.

It belongs to the short-chain dehydrogenases/reductases (SDR) family. Homodimer. In terms of processing, not glycosylated.

It is found in the endoplasmic reticulum membrane. Its subcellular location is the microsome membrane. The catalysed reaction is all-trans-retinol--[retinol-binding protein] + NAD(+) = all-trans-retinal--[retinol-binding protein] + NADH + H(+). The enzyme catalyses 9-cis-retinol + NAD(+) = 9-cis-retinal + NADH + H(+). It carries out the reaction 11-cis-retinol + NAD(+) = 11-cis-retinal + NADH + H(+). It catalyses the reaction 13-cis-retinol + NAD(+) = 13-cis-retinal + NADH + H(+). The catalysed reaction is androsterone + NAD(+) = 5alpha-androstan-3,17-dione + NADH + H(+). The enzyme catalyses 5alpha-androstane-3alpha,17beta-diol + NAD(+) = 17beta-hydroxy-5alpha-androstan-3-one + NADH + H(+). Its pathway is cofactor metabolism; retinol metabolism. In terms of biological role, oxidoreductase with a preference for NAD. Oxidizes all-trans-retinol, 9-cis-retinol, 11-cis-retinol and 13-cis-retinol to the corresponding aldehydes. Has higher activity towards CRBP-bound retinol than with free retinol. Oxidizes 3-alpha-hydroxysteroids. Oxidizes androstanediol and androsterone to dihydrotestosterone and androstanedione. Can also catalyze the reverse reaction. In Mus musculus (Mouse), this protein is Retinol dehydrogenase 16.